We begin with the raw amino-acid sequence, 172 residues long: MDSPSLRELQQPLLEGTECETPAQKPGRHELGSPLREIAFAESLRGLQFLSPPLPSVSAGLGEPRPPDVEDMSSSDSDSDWDGGSRLSPFLPHDHLGLAVFSMLCCFWPVGIAAFCLAQKTNKAWAKGDIQGAGAASRRAFLLGVLAVGLGVCTYAAALVTLAAYLASRDPP.

Disordered stretches follow at residues 1–31 (MDSP…RHEL) and 55–83 (PSVS…DWDG). Topologically, residues 1-97 (MDSPSLRELQ…SPFLPHDHLG (97 aa)) are extracellular. A compositionally biased stretch (acidic residues) spans 69–81 (VEDMSSSDSDSDW). Residues 98–118 (LAVFSMLCCFWPVGIAAFCLA) form a helical membrane-spanning segment. Over 119 to 139 (QKTNKAWAKGDIQGAGAASRR) the chain is Cytoplasmic. The helical transmembrane segment at 140–160 (AFLLGVLAVGLGVCTYAAALV) threads the bilayer. Residues 161 to 172 (TLAAYLASRDPP) are Extracellular-facing.

Belongs to the CD225/Dispanin family.

The protein resides in the membrane. The chain is Transmembrane protein 91 (TMEM91) from Homo sapiens (Human).